The primary structure comprises 378 residues: Anhydro-N-acetylmuramic acid kinase (378 aa).

9–16 (GTSADGID) contacts ATP.

The protein belongs to the anhydro-N-acetylmuramic acid kinase family.

It catalyses the reaction 1,6-anhydro-N-acetyl-beta-muramate + ATP + H2O = N-acetyl-D-muramate 6-phosphate + ADP + H(+). The protein operates within amino-sugar metabolism; 1,6-anhydro-N-acetylmuramate degradation. It functions in the pathway cell wall biogenesis; peptidoglycan recycling. Its function is as follows. Catalyzes the specific phosphorylation of 1,6-anhydro-N-acetylmuramic acid (anhMurNAc) with the simultaneous cleavage of the 1,6-anhydro ring, generating MurNAc-6-P. Is required for the utilization of anhMurNAc either imported from the medium or derived from its own cell wall murein, and thus plays a role in cell wall recycling. The sequence is that of Anhydro-N-acetylmuramic acid kinase from Prochlorococcus marinus (strain NATL1A).